We begin with the raw amino-acid sequence, 788 residues long: Xylulose-5-phosphate phosphoketolase (788 aa).

This sequence belongs to the XFP family. Homohexamer. It depends on thiamine diphosphate as a cofactor.

It catalyses the reaction D-xylulose 5-phosphate + phosphate = acetyl phosphate + D-glyceraldehyde 3-phosphate + H2O. This chain is Xylulose-5-phosphate phosphoketolase (xpkA), found in Lactiplantibacillus pentosus (Lactobacillus pentosus).